The chain runs to 305 residues: Mycothiol acetyltransferase (305 aa).

N-acetyltransferase domains follow at residues 10-153 and 156-305; these read DRLD…LVVP and ISLR…YARA. Glu38 is a binding site for 1D-myo-inositol 2-(L-cysteinylamino)-2-deoxy-alpha-D-glucopyranoside. 82–84 contacts acetyl-CoA; sequence LAV. The 1D-myo-inositol 2-(L-cysteinylamino)-2-deoxy-alpha-D-glucopyranoside site is built by Glu183, Lys225, and Glu238. Acetyl-CoA-binding positions include 242–244 and 249–255; these read VAI and QGRGLGR. Tyr276 serves as a coordination point for 1D-myo-inositol 2-(L-cysteinylamino)-2-deoxy-alpha-D-glucopyranoside. 281 to 286 is an acetyl-CoA binding site; sequence NESALH.

Belongs to the acetyltransferase family. MshD subfamily. Monomer.

The catalysed reaction is 1D-myo-inositol 2-(L-cysteinylamino)-2-deoxy-alpha-D-glucopyranoside + acetyl-CoA = mycothiol + CoA + H(+). Catalyzes the transfer of acetyl from acetyl-CoA to desacetylmycothiol (Cys-GlcN-Ins) to form mycothiol. In Rhodococcus jostii (strain RHA1), this protein is Mycothiol acetyltransferase.